Consider the following 360-residue polypeptide: Phospho-N-acetylmuramoyl-pentapeptide-transferase (360 aa).

10 helical membrane-spanning segments follow: residues 21–41, 73–93, 94–114, 132–152, 168–188, 199–219, 239–259, 263–283, 288–308, and 338–358; these read YLSF…LWMG, TMGG…WADL, SNPY…VGFV, WKYF…YAHG, VMPQ…VGTS, GLAI…AWAT, LVVV…FNTY, VFMG…IAVL, LVLV…ILQV, and VIVR…ATLK.

The protein belongs to the glycosyltransferase 4 family. MraY subfamily. Mg(2+) serves as cofactor.

Its subcellular location is the cell inner membrane. It catalyses the reaction UDP-N-acetyl-alpha-D-muramoyl-L-alanyl-gamma-D-glutamyl-meso-2,6-diaminopimeloyl-D-alanyl-D-alanine + di-trans,octa-cis-undecaprenyl phosphate = di-trans,octa-cis-undecaprenyl diphospho-N-acetyl-alpha-D-muramoyl-L-alanyl-D-glutamyl-meso-2,6-diaminopimeloyl-D-alanyl-D-alanine + UMP. It functions in the pathway cell wall biogenesis; peptidoglycan biosynthesis. Its function is as follows. Catalyzes the initial step of the lipid cycle reactions in the biosynthesis of the cell wall peptidoglycan: transfers peptidoglycan precursor phospho-MurNAc-pentapeptide from UDP-MurNAc-pentapeptide onto the lipid carrier undecaprenyl phosphate, yielding undecaprenyl-pyrophosphoryl-MurNAc-pentapeptide, known as lipid I. This Vibrio atlanticus (strain LGP32) (Vibrio splendidus (strain Mel32)) protein is Phospho-N-acetylmuramoyl-pentapeptide-transferase.